The following is a 122-amino-acid chain: LYR motif-containing protein 1 (122 aa).

This sequence belongs to the complex I LYR family.

In terms of biological role, may promote cell proliferation and inhibition of apoptosis of preadipocytes. The chain is LYR motif-containing protein 1 (Lyrm1) from Rattus norvegicus (Rat).